The chain runs to 251 residues: Carboxy-S-adenosyl-L-methionine synthase (251 aa).

Residues Tyr48, 73–75 (GCS), Asn140, and Arg207 each bind S-adenosyl-L-methionine.

It belongs to the class I-like SAM-binding methyltransferase superfamily. Cx-SAM synthase family. In terms of assembly, homodimer.

The enzyme catalyses prephenate + S-adenosyl-L-methionine = carboxy-S-adenosyl-L-methionine + 3-phenylpyruvate + H2O. In terms of biological role, catalyzes the conversion of S-adenosyl-L-methionine (SAM) to carboxy-S-adenosyl-L-methionine (Cx-SAM). This chain is Carboxy-S-adenosyl-L-methionine synthase, found in Hydrogenovibrio crunogenus (strain DSM 25203 / XCL-2) (Thiomicrospira crunogena).